We begin with the raw amino-acid sequence, 60 residues long: Large ribosomal subunit protein bL32 (60 aa).

The interval 1–36 (MAVQQNKKSPSKRGMHRSHNALNTPGLAIEPTTGET) is disordered. Basic residues predominate over residues 9-19 (SPSKRGMHRSH).

This sequence belongs to the bacterial ribosomal protein bL32 family.

This chain is Large ribosomal subunit protein bL32, found in Methylibium petroleiphilum (strain ATCC BAA-1232 / LMG 22953 / PM1).